Reading from the N-terminus, the 396-residue chain is ATP-dependent RNA helicase eIF4A (396 aa).

The Q motif motif lies at 22–50 (YSFDDLNLKPNIVRGIFGYGYESPSAIQQ). Residues 53 to 223 (ILPITEGRDV…TKFMNNPVRI (171 aa)) form the Helicase ATP-binding domain. Residue 66–73 (AQSGTGKT) coordinates ATP. The short motif at 171 to 174 (DEAD) is the DEAD box element. The Helicase C-terminal domain maps to 234-395 (GIKQFYINVE…EMPANIGELF (162 aa)).

Belongs to the DEAD box helicase family. eIF4A subfamily. Component of the eIF4F complex, which composition varies with external and internal environmental conditions. It is composed of at least eIF4A, eIF4E and eIF4G.

Its subcellular location is the cytoplasm. It carries out the reaction ATP + H2O = ADP + phosphate + H(+). In terms of biological role, ATP-dependent RNA helicase which is a subunit of the eIF4F complex involved in cap recognition and is required for mRNA binding to ribosome. In the current model of translation initiation, eIF4A unwinds RNA secondary structures in the 5'-UTR of mRNAs which is necessary to allow efficient binding of the small ribosomal subunit, and subsequent scanning for the initiator codon. This Meyerozyma guilliermondii (strain ATCC 6260 / CBS 566 / DSM 6381 / JCM 1539 / NBRC 10279 / NRRL Y-324) (Yeast) protein is ATP-dependent RNA helicase eIF4A (TIF1).